Here is a 63-residue protein sequence, read N- to C-terminus: Large ribosomal subunit protein bL35 (63 aa).

Residues 24-44 are disordered; it reads RAKAYRSHRATGKTTKQKRQL.

The protein belongs to the bacterial ribosomal protein bL35 family.

The polypeptide is Large ribosomal subunit protein bL35 (Mycoplasma mycoides subsp. mycoides SC (strain CCUG 32753 / NCTC 10114 / PG1)).